Reading from the N-terminus, the 145-residue chain is Aminoglycoside N(6')-acetyltransferase type 1 (145 aa).

Residues 1-145 form the N-acetyltransferase domain; the sequence is MDIRQMNKTH…ERVIFYRKRC (145 aa). The substrate site is built by tryptophan 22, histidine 25, tyrosine 66, and glutamate 79. Acetyl-CoA contacts are provided by residues 81 to 83 and 89 to 94; these read IFV and QRGVAK. Residue aspartate 115 participates in substrate binding. An acetyl-CoA-binding site is contributed by asparagine 120. Glutamate 136 is a binding site for substrate.

As to quaternary structure, homodimer.

The catalysed reaction is kanamycin B + acetyl-CoA = N(6')-acetylkanamycin B + CoA + H(+). In terms of biological role, catalyzes the transfer of an acetyl group from acetyl-CoA to the 6'-amino group of aminoglycoside molecules conferring resistance to antibiotics containing the purpurosamine ring including amikacin, tobramycin, dibekacin and ribostamycin. Able to acetylate eukaryotic histone proteins. In Salmonella enteritidis, this protein is Aminoglycoside N(6')-acetyltransferase type 1.